The primary structure comprises 496 residues: Alanine aminotransferase 1 (496 aa).

Alanine 2 is subject to N-acetylalanine. Position 22 is a phosphothreonine (threonine 22). N6-(pyridoxal phosphate)lysine is present on lysine 314.

It belongs to the class-I pyridoxal-phosphate-dependent aminotransferase family. Alanine aminotransferase subfamily. Homodimer. Pyridoxal 5'-phosphate is required as a cofactor.

It is found in the cytoplasm. It catalyses the reaction L-alanine + 2-oxoglutarate = pyruvate + L-glutamate. Its pathway is amino-acid degradation; L-alanine degradation via transaminase pathway; pyruvate from L-alanine: step 1/1. In terms of biological role, catalyzes the reversible transamination between alanine and 2-oxoglutarate to form pyruvate and glutamate. Participates in cellular nitrogen metabolism and also in liver gluconeogenesis starting with precursors transported from skeletal muscles. This chain is Alanine aminotransferase 1 (GPT), found in Bos taurus (Bovine).